The following is a 385-amino-acid chain: Flap endonuclease 1 (385 aa).

The interval 1–104 is N-domain; that stretch reads MGILGLSKLI…GELAKRAERR (104 aa). A Mg(2+)-binding site is contributed by aspartate 34. Residues arginine 47 and arginine 70 each coordinate DNA. Mg(2+) is bound by residues aspartate 86, glutamate 158, glutamate 160, aspartate 179, and aspartate 181. Residues 122 to 253 form an I-domain region; it reads GIEKFNRRLV…KRAIELINTY (132 aa). Glutamate 158 contributes to the DNA binding site. DNA contacts are provided by glycine 231 and aspartate 233. Aspartate 233 is a binding site for Mg(2+). Residues 336 to 344 form an interaction with PCNA region; that stretch reads TQVRLDSFF. The interval 346-385 is disordered; the sequence is TLPSTPNATNAAKRKADEAKKSANNKKAKTSGGGRGRRPK. Over residues 368-385 the composition is skewed to basic residues; it reads ANNKKAKTSGGGRGRRPK.

The protein belongs to the XPG/RAD2 endonuclease family. FEN1 subfamily. As to quaternary structure, interacts with PCNA. Three molecules of FEN1 bind to one PCNA trimer with each molecule binding to one PCNA monomer. PCNA stimulates the nuclease activity without altering cleavage specificity. The cofactor is Mg(2+). Post-translationally, phosphorylated. Phosphorylation upon DNA damage induces relocalization to the nuclear plasma.

The protein resides in the nucleus. It is found in the nucleolus. It localises to the nucleoplasm. The protein localises to the mitochondrion. Structure-specific nuclease with 5'-flap endonuclease and 5'-3' exonuclease activities involved in DNA replication and repair. During DNA replication, cleaves the 5'-overhanging flap structure that is generated by displacement synthesis when DNA polymerase encounters the 5'-end of a downstream Okazaki fragment. It enters the flap from the 5'-end and then tracks to cleave the flap base, leaving a nick for ligation. Also involved in the long patch base excision repair (LP-BER) pathway, by cleaving within the apurinic/apyrimidinic (AP) site-terminated flap. Acts as a genome stabilization factor that prevents flaps from equilibrating into structures that lead to duplications and deletions. Also possesses 5'-3' exonuclease activity on nicked or gapped double-stranded DNA, and exhibits RNase H activity. Also involved in replication and repair of rDNA and in repairing mitochondrial DNA. The protein is Flap endonuclease 1 of Drosophila sechellia (Fruit fly).